Consider the following 292-residue polypeptide: GTP cyclohydrolase FolE2 (292 aa).

It belongs to the GTP cyclohydrolase IV family.

It catalyses the reaction GTP + H2O = 7,8-dihydroneopterin 3'-triphosphate + formate + H(+). Its pathway is cofactor biosynthesis; 7,8-dihydroneopterin triphosphate biosynthesis; 7,8-dihydroneopterin triphosphate from GTP: step 1/1. Converts GTP to 7,8-dihydroneopterin triphosphate. This is GTP cyclohydrolase FolE2 from Macrococcus caseolyticus (strain JCSC5402) (Macrococcoides caseolyticum).